A 923-amino-acid polypeptide reads, in one-letter code: Immunomodulating metalloprotease (923 aa).

An N-terminal signal peptide occupies residues 1–41 (MSLSTTAFPSLQGENMSRSPIPRHRALLAGFCLAGALSAQA). The region spanning 450 to 794 (QGFTAIGRMA…FYTQWVHYWA (345 aa)) is the Peptidase M60 domain. His696 lines the Zn(2+) pocket. Glu697 is a catalytic residue. His700 lines the Zn(2+) pocket.

The protein belongs to the peptidase M88 family. Zn(2+) serves as cofactor.

The protein resides in the secreted. Its activity is regulated as follows. Proteolytic activity is blocked in the presence of EDTA. Its function is as follows. Protease that degrades several proteins of the host immune system. Cleaves P-selectin glycoprotein ligand-1 (PSGL-1), leading to its functional inhibition; PSGL-1 is a leukocyte cell-surface receptor essential for leukocyte recruitment to the site of infection. Next to PSGL-1, targets host CD43 and CD44 that are also involved in leukocyte homing. Thus, prevents neutrophil extravasation and thereby protects P.aeruginosa from neutrophil attack. Is also able to inhibit the decay accelerating factor (CD55), but not the cell-surface receptors CD46 and CD31. The polypeptide is Immunomodulating metalloprotease (Pseudomonas aeruginosa (strain ATCC 15692 / DSM 22644 / CIP 104116 / JCM 14847 / LMG 12228 / 1C / PRS 101 / PAO1)).